Here is a 132-residue protein sequence, read N- to C-terminus: MTMTDPIADFLTRLRNANSAYHDEVSLPHSKIKANIAQILKNEGYISDFHTEDARVGKSLIVQLKYGPSRERSIAGLRRVSKPGLRVYAKSTNLPRVLGGLGVAIISTSSGLLTDRQAARQGVGGEVLAYVW.

It belongs to the universal ribosomal protein uS8 family. As to quaternary structure, part of the 30S ribosomal subunit. Contacts proteins S5 and S12.

In terms of biological role, one of the primary rRNA binding proteins, it binds directly to 16S rRNA central domain where it helps coordinate assembly of the platform of the 30S subunit. In Mycobacterium marinum (strain ATCC BAA-535 / M), this protein is Small ribosomal subunit protein uS8.